We begin with the raw amino-acid sequence, 434 residues long: Probable G-protein coupled receptor B0563.6 (434 aa).

N-linked (GlcNAc...) asparagine glycosylation occurs at N12. 2 consecutive transmembrane segments (helical) span residues 30-50 and 65-85; these read VLPC…MVLA and LAVA…TEYL. A glycan (N-linked (GlcNAc...) asparagine) is linked at N88. The next 2 helical transmembrane spans lie at 105–125 and 147–167; these read LMLT…VALS and ATRA…PYAI. N-linked (GlcNAc...) asparagine glycosylation occurs at N181. Helical transmembrane passes span 208 to 228 and 258 to 278; these read ILRF…MIAF and GGTV…LLLI. N-linked (GlcNAc...) asparagine glycosylation is found at N429 and N430.

This sequence belongs to the G-protein coupled receptor 1 family.

Its subcellular location is the cell membrane. Not known. Putative receptor. The chain is Probable G-protein coupled receptor B0563.6 from Caenorhabditis elegans.